The sequence spans 657 residues: 1-deoxy-D-xylulose-5-phosphate synthase (657 aa).

Residues His-73 and 113 to 115 (SHA) each bind thiamine diphosphate. Residue Asp-145 participates in Mg(2+) binding. Residues 146–147 (GA), Asn-175, Tyr-293, and Glu-375 each bind thiamine diphosphate. Position 175 (Asn-175) interacts with Mg(2+).

Belongs to the transketolase family. DXPS subfamily. Homodimer. The cofactor is Mg(2+). Thiamine diphosphate serves as cofactor.

It carries out the reaction D-glyceraldehyde 3-phosphate + pyruvate + H(+) = 1-deoxy-D-xylulose 5-phosphate + CO2. The protein operates within metabolic intermediate biosynthesis; 1-deoxy-D-xylulose 5-phosphate biosynthesis; 1-deoxy-D-xylulose 5-phosphate from D-glyceraldehyde 3-phosphate and pyruvate: step 1/1. Catalyzes the acyloin condensation reaction between C atoms 2 and 3 of pyruvate and glyceraldehyde 3-phosphate to yield 1-deoxy-D-xylulose-5-phosphate (DXP). The chain is 1-deoxy-D-xylulose-5-phosphate synthase from Renibacterium salmoninarum (strain ATCC 33209 / DSM 20767 / JCM 11484 / NBRC 15589 / NCIMB 2235).